A 469-amino-acid chain; its full sequence is UDP-N-acetylmuramate--L-alanine ligase (469 aa).

G112–T118 lines the ATP pocket.

The protein belongs to the MurCDEF family.

The protein resides in the cytoplasm. The catalysed reaction is UDP-N-acetyl-alpha-D-muramate + L-alanine + ATP = UDP-N-acetyl-alpha-D-muramoyl-L-alanine + ADP + phosphate + H(+). The protein operates within cell wall biogenesis; peptidoglycan biosynthesis. Cell wall formation. This Herminiimonas arsenicoxydans protein is UDP-N-acetylmuramate--L-alanine ligase.